We begin with the raw amino-acid sequence, 381 residues long: DNA dC-&gt;dU-editing enzyme APOBEC-3G (381 aa).

Residues 1 to 62 are essential for cytoplasmic localization; sequence MKPQTRNTVV…ANIFQGQVSF (62 aa). CMP/dCMP-type deaminase domains follow at residues 29-143 and 211-325; these read HRNT…SQTG and GQHQ…LRRL. A Phosphothreonine; by PKA modification is found at T32. Positions 67, 98, and 101 each coordinate Zn(2+). Residues 206 to 333 are necessary for homooligomerization; it reads DPSVLGQHQS…RLDRAGTPIS (128 aa). An interaction with DNA region spans residues 210 to 212; the sequence is LGQ. H254 is a Zn(2+) binding site. The active-site Proton donor is E256. Residues C285 and C288 each coordinate Zn(2+). Residues 310 to 317 are interaction with DNA; sequence RIYDYQRG.

Belongs to the cytidine and deoxycytidylate deaminase family. In terms of assembly, homodimer. Homooligomer. Can bind RNA to form ribonucleoprotein complexes of high-molecular-mass (HMM) or low-molecular-mass (LMM). HMM is inactive and heterogeneous in protein composition because of binding nonselectively to cellular RNAs, which in turn are associated with variety of cellular proteins. The LMM form which is enzymatically active has few or no RNAs associated. Its ability to form homooligomer is distinct from its ability to assemble into HMM. Interacts with APOBEC3B, APOBEC3F, MOV10, AGO2, EIF4E, EIF4ENIF1, DCP2 and DDX6 in an RNA-dependent manner. Interacts with AGO1, AGO3 and PKA/PRKACA. The cofactor is Zn(2+).

The protein localises to the cytoplasm. The protein resides in the nucleus. It localises to the P-body. It carries out the reaction a 2'-deoxycytidine in single-stranded DNA + H2O + H(+) = a 2'-deoxyuridine in single-stranded DNA + NH4(+). Its function is as follows. DNA deaminase (cytidine deaminase) which acts as an inhibitor of retrovirus replication and retrotransposon mobility. After the penetration of retroviral nucleocapsids into target cells of infection and the initiation of reverse transcription, it can induce the conversion of cytosine to uracil in the minus-sense single-strand viral DNA, leading to G-to-A hypermutations in the subsequent plus-strand viral DNA. The resultant detrimental levels of mutations in the proviral genome, along with a deamination-independent mechanism that works prior to the proviral integration, together exert efficient antiretroviral effects in infected target cells. Selectively targets single-stranded DNA and does not deaminate double-stranded DNA or single- or double-stranded RNA. The protein is DNA dC-&gt;dU-editing enzyme APOBEC-3G (APOBEC3G) of Lagothrix lagotricha (Brown woolly monkey).